The primary structure comprises 262 residues: Small ribosomal subunit protein mS23 (262 aa).

Residues 242–254 (AAEEQETSLDDDA) show a composition bias toward acidic residues. Residues 242–262 (AAEEQETSLDDDATEKVAVAA) form a disordered region.

It belongs to the mitochondrion-specific ribosomal protein mS23 family. As to quaternary structure, component of the mitochondrial small ribosomal subunit.

It is found in the mitochondrion. This Aspergillus niger (strain ATCC MYA-4892 / CBS 513.88 / FGSC A1513) protein is Small ribosomal subunit protein mS23 (rsm25).